The sequence spans 465 residues: MSLSLWQQCLARLHDELPATEFSMWIRPLQAELSDNTLALYAPNRFVLDWVRDKYLNNINVLLNDFCGMDAPLLRFEVGSKPLVQAISQPAQPHHKQVSAAPQQQVRSAPVRPSWDNSPAQAEHTYRSNVNPKHTFDNFVEGKSNQLARAAARQVADNPGGAYNPLFLYGGTGLGKTHLLHAVGNGIIARKPNAKVVYMHSERFVQDMVKALQNNAIEEFKRYYRSVDALLIDDIQFFANKERSQEEFFHTFNALLEGNQQIILTSDRYPKEINGVEDRLKSRFGWGLTVAIEPPELETRVAILMKKADENDIRLPGEVAFFIAKRLRSNVRELEGALNRVIANANFTGRSITIDFVREALRDLLALQEKLVTIDNIQKTVAEYYKIKVADLLSKRRSRSVARPRQMAMALAKELTNHSLPEIGDAFGGRDHTTVLHACRKIEQLREESHDIKEDFSNLIRTLSS.

The domain I, interacts with DnaA modulators stretch occupies residues 1–84; sequence MSLSLWQQCL…RFEVGSKPLV (84 aa). Residues 84–128 form a domain II region; sequence VQAISQPAQPHHKQVSAAPQQQVRSAPVRPSWDNSPAQAEHTYRS. The interval 91–120 is disordered; the sequence is AQPHHKQVSAAPQQQVRSAPVRPSWDNSPA. The segment at 129–345 is domain III, AAA+ region; sequence NVNPKHTFDN…GALNRVIANA (217 aa). ATP-binding residues include Gly-173, Gly-175, Lys-176, and Thr-177. Residues 346 to 465 are domain IV, binds dsDNA; it reads NFTGRSITID…FSNLIRTLSS (120 aa).

It belongs to the DnaA family. In terms of assembly, oligomerizes as a right-handed, spiral filament on DNA at oriC.

It localises to the cytoplasm. Plays an essential role in the initiation and regulation of chromosomal replication. ATP-DnaA binds to the origin of replication (oriC) to initiate formation of the DNA replication initiation complex once per cell cycle. Binds the DnaA box (a 9 base pair repeat at the origin) and separates the double-stranded (ds)DNA. Forms a right-handed helical filament on oriC DNA; dsDNA binds to the exterior of the filament while single-stranded (ss)DNA is stabiized in the filament's interior. The ATP-DnaA-oriC complex binds and stabilizes one strand of the AT-rich DNA unwinding element (DUE), permitting loading of DNA polymerase. After initiation quickly degrades to an ADP-DnaA complex that is not apt for DNA replication. Binds acidic phospholipids. The sequence is that of Chromosomal replication initiator protein DnaA from Pectobacterium carotovorum subsp. carotovorum (strain PC1).